The sequence spans 568 residues: Oxygen-dependent choline dehydrogenase (568 aa).

An FAD-binding site is contributed by 8-37 (DYIIIGAGSAGNTLAARLTEDAGVTVLLLE). His-477 serves as the catalytic Proton acceptor.

Belongs to the GMC oxidoreductase family. FAD serves as cofactor.

The catalysed reaction is choline + A = betaine aldehyde + AH2. It carries out the reaction betaine aldehyde + NAD(+) + H2O = glycine betaine + NADH + 2 H(+). It functions in the pathway amine and polyamine biosynthesis; betaine biosynthesis via choline pathway; betaine aldehyde from choline (cytochrome c reductase route): step 1/1. In terms of biological role, involved in the biosynthesis of the osmoprotectant glycine betaine. Catalyzes the oxidation of choline to betaine aldehyde and betaine aldehyde to glycine betaine at the same rate. In Pseudomonas syringae pv. tomato (strain ATCC BAA-871 / DC3000), this protein is Oxygen-dependent choline dehydrogenase.